A 418-amino-acid polypeptide reads, in one-letter code: MYSSDAPINWKRNLTITWIGCFLTGAAFSLVMPFLPLYVESLGVTGHSALNMWSGLVFSITFLFSAIASPFWGGLADRKGRKIMLLRSALGMAIVMLLMGLAQNIWQFLILRALLGLLGGFIPNANALIATQIPRHKSGWALGTLSTGGVSGALLGPLVGGVLADSYGLRPVFFMTASVLFLCFLLTLLFIREQFQPVAKKEMLHAREVIASLKSPKLVLSLFVTTLIIQVATGSIAPILTLYVRDLAGNVANIAFISGMIASVPGVAALISAPRLGKLGDRIGPEKILIAALVISVLLLIPMSFVQTPWQLGLLRFLLGAADGALLPAVQTLLVYNATNQIAGRVFSYNQSFRDIGNVTGPLIGASVSANYGFRAVFLVTAMVVLFNAVYTGLSLRRTGATALPAQDVEKDDTSLVR.

11 consecutive transmembrane segments (helical) span residues 19-39, 56-76, 90-110, 113-133, 144-164, 171-191, 222-242, 251-271, 288-308, 317-337, and 376-396; these read IGCF…PLYV, LVFS…GGLA, LGMA…QFLI, ALLG…ATQI, TLST…GVLA, PVFF…LLFI, LFVT…ILTL, VANI…AALI, ILIA…FVQT, FLLG…LVYN, and AVFL…GLSL.

The protein belongs to the major facilitator superfamily. DHA1 family. MdtG (TC 2.A.1.2.20) subfamily.

It localises to the cell inner membrane. The sequence is that of Multidrug resistance protein MdtG from Enterobacter lignolyticus (strain SCF1).